We begin with the raw amino-acid sequence, 593 residues long: Melanopsin-A (593 aa).

Residues 1 to 77 lie on the Extracellular side of the membrane; that stretch reads MMSGAAHSVR…VDVPDHAHYT (77 aa). The helical transmembrane segment at 78–98 threads the bilayer; it reads IGAVILTVGITGMLGNFLVIY. The Cytoplasmic segment spans residues 99-112; it reads AFSRSRTLRTPANL. The helical transmembrane segment at 113–133 threads the bilayer; that stretch reads FIINLAITDFLMCATQAPIFF. Topologically, residues 134–150 are extracellular; that stretch reads TTSMHKRWIFGEKGCEL. A disulfide bond links Cys-148 and Cys-226. A helical membrane pass occupies residues 151 to 171; it reads YAFCGALFGICSMITLMVIAV. Residues 172–191 lie on the Cytoplasmic side of the membrane; that stretch reads DRYFVITRPLASIGVLSQKR. A helical transmembrane segment spans residues 192 to 212; that stretch reads ALLILLVAWVYSLGWSLPPFF. The Extracellular portion of the chain corresponds to 213–243; that stretch reads GWSAYVPEGLLTSCTWDYMTFTPSVRAYTML. A helical transmembrane segment spans residues 244 to 264; it reads LFIFVFFIPLIVIIYCYFFIF. Residues 265-300 lie on the Cytoplasmic side of the membrane; sequence RSIRTTNEAVGKINGDNKRDSMKRFQRLKNEWKMAK. A helical transmembrane segment spans residues 301 to 321; it reads IALIVILMYVISWSPYSTVAL. At 322–336 the chain is on the extracellular side; that stretch reads TAFAGYSDFLTPYMN. A helical membrane pass occupies residues 337-357; that stretch reads SVPAVIAKASAIHNPIIYAIT. The residue at position 344 (Lys-344) is an N6-(retinylidene)lysine. At 358–593 the chain is on the cytoplasmic side; the sequence is HPKYRLAIAK…HIDNHRPQYL (236 aa). 2 disordered regions span residues 397 to 449 and 547 to 593; these read TVTS…RQVS and RSNV…PQYL. Residues 414-449 are compositionally biased toward polar residues; that stretch reads TGKSRLSSASDSESGWTDTEADLSSMSSRPASRQVS. Residues 581–593 are compositionally biased toward basic and acidic residues; the sequence is ESGHIDNHRPQYL.

It belongs to the G-protein coupled receptor 1 family. Opsin subfamily.

The protein resides in the cell membrane. Photoreceptor implicated in non-image-forming responses to light. May be able to isomerize covalently bound all-trans retinal back to 11-cis retinal. The polypeptide is Melanopsin-A (opn4a) (Danio rerio (Zebrafish)).